An 80-amino-acid polypeptide reads, in one-letter code: Exodeoxyribonuclease 7 small subunit (80 aa).

Belongs to the XseB family. In terms of assembly, heterooligomer composed of large and small subunits.

Its subcellular location is the cytoplasm. The enzyme catalyses Exonucleolytic cleavage in either 5'- to 3'- or 3'- to 5'-direction to yield nucleoside 5'-phosphates.. Its function is as follows. Bidirectionally degrades single-stranded DNA into large acid-insoluble oligonucleotides, which are then degraded further into small acid-soluble oligonucleotides. This Rickettsia massiliae (strain Mtu5) protein is Exodeoxyribonuclease 7 small subunit.